A 452-amino-acid chain; its full sequence is Pup--protein ligase (452 aa).

Position 9 (glutamate 9) interacts with Mg(2+). Position 53 (arginine 53) interacts with ATP. Tyrosine 55 contacts Mg(2+). The active-site Proton acceptor is the aspartate 57. Residue glutamate 63 participates in Mg(2+) binding. ATP-binding residues include threonine 66 and tryptophan 419.

This sequence belongs to the Pup ligase/Pup deamidase family. Pup-conjugating enzyme subfamily.

It carries out the reaction ATP + [prokaryotic ubiquitin-like protein]-L-glutamate + [protein]-L-lysine = ADP + phosphate + N(6)-([prokaryotic ubiquitin-like protein]-gamma-L-glutamyl)-[protein]-L-lysine.. It participates in protein degradation; proteasomal Pup-dependent pathway. The protein operates within protein modification; protein pupylation. In terms of biological role, catalyzes the covalent attachment of the prokaryotic ubiquitin-like protein modifier Pup to the proteasomal substrate proteins, thereby targeting them for proteasomal degradation. This tagging system is termed pupylation. The ligation reaction involves the side-chain carboxylate of the C-terminal glutamate of Pup and the side-chain amino group of a substrate lysine. The protein is Pup--protein ligase of Thermobifida fusca (strain YX).